Consider the following 413-residue polypeptide: MLIRSASIIRNGSLLKNIDILIEGNRISEVGRDLRPNDDEIIDARNMLAVPGLVNSHTHLAMTLLRGYADDMELIPWLQEKIWPLEARLKPSDVRAGVKLGCLELIRFGVTCYNDMYYFMDETAAATREMGIRGVLSGVLFDMRPEFINDVEPFIKKWRDDDLIKPAVGPHAVYTCSEETLLRAKDIAERYDVKIHIHLSETRDEVDTFVNQRHMSPVEYLENLGFLSERVVAAHCVWLTPRDIRILAERHVNVAHCPISNLKLASGIAPVATLIEHGVNVCLGTDGASSNNNLDIFEEMKVAAVVQKCSVGRSAILPADAVWRMATENAYKAFSLDMGIRRGALADLALINMRRPWFIPVTSMISHLVYSMSGEASYTICNGRVLMRDGVIEGEAKILDEAQRCYERLISEE.

2 residues coordinate Zn(2+): histidine 57 and histidine 59. Substrate is bound by residues glutamate 86 and histidine 171. Histidine 198 is a binding site for Zn(2+). Substrate contacts are provided by glutamate 201 and aspartate 286. Zn(2+) is bound at residue aspartate 286.

Belongs to the metallo-dependent hydrolases superfamily. MTA/SAH deaminase family. As to quaternary structure, homotetramer. Zn(2+) serves as cofactor.

It carries out the reaction 5'-deoxyadenosine + H2O + H(+) = 5'-deoxyinosine + NH4(+). The enzyme catalyses S-adenosyl-L-homocysteine + H2O + H(+) = S-inosyl-L-homocysteine + NH4(+). It catalyses the reaction S-methyl-5'-thioadenosine + H2O + H(+) = S-methyl-5'-thioinosine + NH4(+). The catalysed reaction is adenosine + H2O + H(+) = inosine + NH4(+). Its pathway is amino-acid biosynthesis; S-adenosyl-L-methionine biosynthesis. In terms of biological role, catalyzes the deamination of three SAM-derived enzymatic products, namely 5'-deoxyadenosine, S-adenosyl-L-homocysteine, and 5'-methylthioadenosine, to produce the inosine analogs. Can also deaminate adenosine. The preferred substrate for this enzyme is 5'-deoxyadenosine, but all these substrates are efficiently deaminated. Likely functions in a S-adenosyl-L-methionine (SAM) recycling pathway from S-adenosyl-L-homocysteine (SAH) produced from SAM-dependent methylation reactions. May also be involved in the recycling of 5'-deoxyadenosine, whereupon the 5'-deoxyribose moiety of 5'-deoxyinosine is further metabolized to deoxyhexoses used for the biosynthesis of aromatic amino acids in methanogens. The sequence is that of 5'-deoxyadenosine deaminase from Methanothrix thermoacetophila (strain DSM 6194 / JCM 14653 / NBRC 101360 / PT) (Methanosaeta thermophila).